The following is a 714-amino-acid chain: Polyribonucleotide nucleotidyltransferase (714 aa).

Mg(2+) is bound by residues Asp-488 and Asp-494. One can recognise a KH domain in the interval 555–614 (PRIEVMNIPVDKIREVIGSGGKVIREIVEKTGAKINIDDDGTVKIASASGKEIEAARKWI). One can recognise an S1 motif domain in the interval 624 to 692 (GQVYEGTVVK…ERGKVRLSMK (69 aa)).

Belongs to the polyribonucleotide nucleotidyltransferase family. The cofactor is Mg(2+).

It is found in the cytoplasm. It carries out the reaction RNA(n+1) + phosphate = RNA(n) + a ribonucleoside 5'-diphosphate. Functionally, involved in mRNA degradation. Catalyzes the phosphorolysis of single-stranded polyribonucleotides processively in the 3'- to 5'-direction. The polypeptide is Polyribonucleotide nucleotidyltransferase (Sinorhizobium medicae (strain WSM419) (Ensifer medicae)).